The sequence spans 95 residues: Ribonuclease kappa-B (95 aa).

Helical transmembrane passes span Gly12–Ile32 and Cys68–Val88.

Belongs to the RNase K family.

It localises to the membrane. With respect to regulation, inhibited by Zn(2+) and Hg(2+), while it is unaffected by Ca(2+). Functionally, endoribonuclease which displays activity against poly(C) and poly(U) synthetic substrates, as well as rRNA. This chain is Ribonuclease kappa-B, found in Ceratitis capitata (Mediterranean fruit fly).